The sequence spans 136 residues: Large ribosomal subunit protein bL17 (136 aa).

It belongs to the bacterial ribosomal protein bL17 family. In terms of assembly, part of the 50S ribosomal subunit. Contacts protein L32.

In Rickettsia prowazekii (strain Madrid E), this protein is Large ribosomal subunit protein bL17.